Reading from the N-terminus, the 324-residue chain is tRNA dimethylallyltransferase (324 aa).

17–24 lines the ATP pocket; that stretch reads GPTASGKT. 19-24 lines the substrate pocket; the sequence is TASGKT. 3 interaction with substrate tRNA regions span residues 42 to 45, 166 to 170, and 251 to 256; these read DSAL, QRIQR, and RCVGYR.

The protein belongs to the IPP transferase family. In terms of assembly, monomer. It depends on Mg(2+) as a cofactor.

The catalysed reaction is adenosine(37) in tRNA + dimethylallyl diphosphate = N(6)-dimethylallyladenosine(37) in tRNA + diphosphate. Catalyzes the transfer of a dimethylallyl group onto the adenine at position 37 in tRNAs that read codons beginning with uridine, leading to the formation of N6-(dimethylallyl)adenosine (i(6)A). This Burkholderia pseudomallei (strain 668) protein is tRNA dimethylallyltransferase.